A 196-amino-acid polypeptide reads, in one-letter code: Adenylate kinase (196 aa).

ATP is bound at residue 9–17 (GIPGVGKST).

It belongs to the archaeal adenylate kinase family.

The protein localises to the cytoplasm. It carries out the reaction AMP + ATP = 2 ADP. The sequence is that of Adenylate kinase from Thermococcus onnurineus (strain NA1).